Here is a 1056-residue protein sequence, read N- to C-terminus: MAKKAIDSRIPSLIRNGVQTKQRSIFVIVGDRARNQLPNLHYLMMSADLKMNKSVLWAYKKKLLGFTSHRKKRENKIKKEIKRGTREVNEMDPFESFISNQNIRYVYYKESEKILGNTYGMCILQDFEALTPNLLARTIETVEGGGIVVILLKSMSSLKQLYTMTMDVHARYRTEAHGDVVARFNERFILSLGSNPNCLVVDDELNVLPLSGAKNVKPLPPKEDDELPPKQLELQELKESLEDVQPAGSLVSLSKTVNQAHAILSFIDAISEKTLNFTVALTAGRGRGKSAALGISIAAAVSHGYSNIFVTSPSPENLKTLFEFIFKGFDALGYQEHIDYDIIQSTNPDFNKAIVRVDIKRDHRQTIQYIVPQDHQVLGQAELVVIDEAAAIPLPIVKNLLGPYLVFMASTINGYEGTGRSLSLKLIQQLRNQNNTSGRESTQTAVVSRDNKEKDSHLHSQSRQLREISLDEPIRYAPGDPIEKWLNKLLCLDVTLIKNPRFATRGTPHPSQCNLFVVNRDTLFSYHPVSENFLEKMMALYVSSHYKNSPNDLQLMSDAPAHKLFVLLPPIDPKDGGRIPDPLCVIQIALEGEISKESVRNSLSRGQRAGGDLIPWLISQQFQDEEFASLSGARIVRIATNPEYASMGYGSRAIELLRDYFEGKFTDMSEDVRPKDYSIKRVSDKELAKTNLLKDDVKLRDAKTLPPLLLKLSEQPPHYLHYLGVSYGLTQSLHKFWKNNSFVPVYLRQTANDLTGEHTCVMLNVLEGRESNWLVEFAKDFRKRFLSLLSYDFHKFTAVQALSVIESSKKAQDLSDDEKHDNKELTRTHLDDIFSPFDLKRLDSYSNNLLDYHVIGDMIPMLALLYFGDKMGDSVKLSSVQSAILLAIGLQRKNIDTIAKELNLPSNQTIAMFAKIMRKMSQYFRQLLSQSIEETLPNIKDDAIAEMDGEEIKNYNAAEALDQMEEDLEEAGSEAVQAMREKQKELINSLNLDKYAINDNSEEWAESQKSLEIAAKAKGVVSLKTGKKRTTEKAEDIYRQEMKAMKKPRKSKKAAN.

Residue 286-295 coordinates ATP; sequence GRGKSAALGI. The segment covering 433–446 has biased composition (polar residues); it reads QNNTSGRESTQTAV. The disordered stretch occupies residues 433–463; that stretch reads QNNTSGRESTQTAVVSRDNKEKDSHLHSQSR. A compositionally biased stretch (basic and acidic residues) spans 449–463; it reads RDNKEKDSHLHSQSR. Arg-475 serves as a coordination point for ATP. The 141-residue stretch at 566–706 folds into the N-acetyltransferase domain; the sequence is VLLPPIDPKD…VKLRDAKTLP (141 aa). Residues 638-640, 645-651, and Asn-739 contribute to the acetyl-CoA site; these read IAT and ASMGYGS. A phosphoserine mark is found at Ser-1001, Ser-1007, and Ser-1010.

Belongs to the RNA cytidine acetyltransferase family. NAT10 subfamily. As to quaternary structure, interacts with TAN1. Associates with 90S pre-ribosomal particles.

The protein resides in the nucleus. Its subcellular location is the nucleolus. The catalysed reaction is a cytidine in 18S rRNA + acetyl-CoA + ATP + H2O = an N(4)-acetylcytidine in 18S rRNA + ADP + phosphate + CoA + H(+). The enzyme catalyses a cytidine in tRNA + acetyl-CoA + ATP + H2O = an N(4)-acetylcytidine in tRNA + ADP + phosphate + CoA + H(+). RNA cytidine acetyltransferase with specificity toward both 18S rRNA and tRNAs. Catalyzes the formation of N(4)-acetylcytidine (ac4C) at positions 1280 and 1773 in 18S rRNA. Required for early nucleolar cleavages of precursor rRNA at sites A0, A1 and A2 during 18S rRNA synthesis. Catalyzes the formation of ac4C at position 12 in serine and leucine tRNAs. Requires the tRNA-binding adapter protein TAN1 for full tRNA acetyltransferase activity but not for 18S rRNA acetylation. The protein is RNA cytidine acetyltransferase of Saccharomyces cerevisiae (strain ATCC 204508 / S288c) (Baker's yeast).